A 789-amino-acid chain; its full sequence is Mediator of RNA polymerase II transcription subunit 15 (789 aa).

The interval 9–73 is interaction with SREBF1; that stretch reads DWRSAAFRQK…IHFRDIHNKK (65 aa). Disordered stretches follow at residues 88 to 140 and 257 to 326; these read LTGG…APHG and QQQA…PLVS. A compositionally biased stretch (low complexity) spans 89 to 102; the sequence is TGGPTPGAAGIGMP. Residues 108-118 are compositionally biased toward gly residues; the sequence is QSLGGMGGLGA. 3 stretches are compositionally biased toward low complexity: residues 257 to 274, 282 to 291, and 302 to 326; these read QQQA…SMQQ, ALPQQLSQLH, and AQQS…PLVS. The residue at position 347 (Arg-347) is an Asymmetric dimethylarginine. Residues 404 to 531 form a disordered region; that stretch reads RFPPTSTMSA…PAGSSQAEEQ (128 aa). The span at 407-426 shows a compositional bias: polar residues; that stretch reads PTSTMSAGPSSSISLGGQPT. Residues 427–450 show a composition bias toward low complexity; it reads TQVSQSSLTMLSSPSPGQQVQTPQ. Pro residues predominate over residues 451 to 463; sequence SMPPPPQPSPQPG. A compositionally biased stretch (low complexity) spans 464–483; the sequence is SQPNSNVSSGPAPSPSSFLP. Composition is skewed to polar residues over residues 494–504 and 512–530; these read VTARTPQNFSV and TPVN…QAEE. The Nuclear localization signal signature appears at 548 to 565; that stretch reads RRMINKIDKNEDRKKDLS. A Phosphothreonine modification is found at Thr-604.

Belongs to the Mediator complex subunit 15 family. Component of the Mediator complex, which is composed of MED1, MED4, MED6, MED7, MED8, MED9, MED10, MED11, MED12, MED13, MED13L, MED14, MED15, MED16, MED17, MED18, MED19, MED20, MED21, MED22, MED23, MED24, MED25, MED26, MED27, MED29, MED30, MED31, CCNC, CDK8 and CDC2L6/CDK11. The MED12, MED13, CCNC and CDK8 subunits form a distinct module termed the CDK8 module. Mediator containing the CDK8 module is less active than Mediator lacking this module in supporting transcriptional activation. Individual preparations of the Mediator complex lacking one or more distinct subunits have been variously termed ARC, CRSP, DRIP, PC2, SMCC and TRAP. Interacts with SMAD2, SMAD3, SREBF1 and SREBF2. Interacts with WWTR1. Interacts with TRIM11. In terms of processing, ubiquitinated by TRIM11, leading to proteasomal degradation.

It localises to the cytoplasm. The protein resides in the nucleus. Functionally, component of the Mediator complex, a coactivator involved in the regulated transcription of nearly all RNA polymerase II-dependent genes. Mediator functions as a bridge to convey information from gene-specific regulatory proteins to the basal RNA polymerase II transcription machinery. Mediator is recruited to promoters by direct interactions with regulatory proteins and serves as a scaffold for the assembly of a functional preinitiation complex with RNA polymerase II and the general transcription factors. Required for cholesterol-dependent gene regulation. Positively regulates the Nodal signaling pathway. The protein is Mediator of RNA polymerase II transcription subunit 15 (Med15) of Mus musculus (Mouse).